Consider the following 325-residue polypeptide: Heat-inducible transcription repressor HrcA (325 aa).

It belongs to the HrcA family.

Negative regulator of class I heat shock genes (grpE-dnaK-dnaJ and groELS operons). Prevents heat-shock induction of these operons. This chain is Heat-inducible transcription repressor HrcA, found in Staphylococcus haemolyticus (strain JCSC1435).